The primary structure comprises 1047 residues: Formin-like protein 3 (1047 aa).

Residue Gly-2 is the site of N-myristoyl glycine attachment. The region spanning 22–462 (VPMPDPTELE…AAFQRHNNIE (441 aa)) is the GBD/FH3 domain. A disordered region spans residues 520–561 (AVPVEAVAPPPPPPPPPPPPPPAPPLPSEVESIPIPPPPPPP). Pro residues predominate over residues 527–546 (APPPPPPPPPPPPPPAPPLP). The region spanning 580–970 (IKKPIKTKFR…MREKLLAQEA (391 aa)) is the FH2 domain. The DAD domain occupies 1000–1037 (DHRPVYEGKDGTIEDIITVLKSVPFTARTAKRGSRFFC).

It belongs to the formin homology family.

The protein localises to the cytoplasm. Its subcellular location is the cell membrane. Required for developmental angiogenesis, but not for vasculogenesis. The chain is Formin-like protein 3 (fmnl3) from Danio rerio (Zebrafish).